The sequence spans 304 residues: 17-beta-hydroxysteroid dehydrogenase 13 (304 aa).

The signal sequence occupies residues 1–19 (MNLILEFLLLVGVIIYSYL). Serine 33 carries the post-translational modification Phosphoserine. 40–67 (LITGAGHGIGRLTAYEFAKQKSRLVLWD) contributes to the NAD(+) binding site. The residue at position 79 (lysine 79) is an N6-acetyllysine. Serine 172 is a substrate binding site. Tyrosine 185 (proton acceptor) is an active-site residue. Residue lysine 189 participates in NAD(+) binding. The tract at residues 276–304 (SSKHPHGGSQQPVTPIPGDLTPSSDFLKH) is disordered.

This sequence belongs to the short-chain dehydrogenases/reductases (SDR) family. As to expression, expressed predominantly in the liver (at protein level).

Its subcellular location is the lipid droplet. It localises to the endoplasmic reticulum. The catalysed reaction is 17beta-estradiol + NAD(+) = estrone + NADH + H(+). It catalyses the reaction all-trans-retinol + NAD(+) = all-trans-retinal + NADH + H(+). The enzyme catalyses all-trans-retinal + NAD(+) + H2O = all-trans-retinoate + NADH + 2 H(+). Functionally, plays a pivotal role in hepatic lipid metabolism. In vitro, it catalyzes the oxidation of a variety of lipid substrates, including 17beta-estradiol, retinol, retinal, and leukotriene B4. In Mus musculus (Mouse), this protein is 17-beta-hydroxysteroid dehydrogenase 13 (Hsd17b13).